The sequence spans 490 residues: Cysteine--tRNA ligase (490 aa).

Cysteine 31 provides a ligand contact to Zn(2+). The 'HIGH' region signature appears at 33–43 (PTVYGDAHLGH). Zn(2+)-binding residues include cysteine 226, histidine 251, and glutamate 255. The 'KMSKS' region motif lies at 283–287 (KMGKS). An ATP-binding site is contributed by lysine 286.

The protein belongs to the class-I aminoacyl-tRNA synthetase family. In terms of assembly, monomer. It depends on Zn(2+) as a cofactor.

The protein localises to the cytoplasm. It catalyses the reaction tRNA(Cys) + L-cysteine + ATP = L-cysteinyl-tRNA(Cys) + AMP + diphosphate. This Porphyromonas gingivalis (strain ATCC BAA-308 / W83) protein is Cysteine--tRNA ligase.